The sequence spans 157 residues: Probable Brix domain-containing ribosomal biogenesis protein (157 aa).

Residues 1–157 (MLVTTSRKPS…KFNIKGFKKY (157 aa)) form the Brix domain.

Functionally, probably involved in the biogenesis of the ribosome. The polypeptide is Probable Brix domain-containing ribosomal biogenesis protein (Methanosarcina mazei (strain ATCC BAA-159 / DSM 3647 / Goe1 / Go1 / JCM 11833 / OCM 88) (Methanosarcina frisia)).